The chain runs to 414 residues: Translation initiation factor 2 subunit gamma (414 aa).

The tr-type G domain maps to 8–206 (QPEVNIGVVG…AIEKFIPTPP (199 aa)). The G1 stretch occupies residues 17-24 (GHVDHGKT). Aspartate 20, threonine 24, glycine 45, and threonine 47 together coordinate Mg(2+). A GTP-binding site is contributed by 20 to 25 (DHGKTT). The segment at 45–49 (GMTIK) is G2. Residues cysteine 60, cysteine 63, cysteine 75, and cysteine 77 each coordinate Zn(2+). Residues 93–96 (DAPG) are G3. Residues 149–152 (NKVD) and 184–186 (SAL) each bind GTP. The G4 stretch occupies residues 149–152 (NKVD). The G5 stretch occupies residues 184 to 186 (SAL).

Belongs to the TRAFAC class translation factor GTPase superfamily. Classic translation factor GTPase family. EIF2G subfamily. Heterotrimer composed of an alpha, a beta and a gamma chain. It depends on Mg(2+) as a cofactor.

It catalyses the reaction GTP + H2O = GDP + phosphate + H(+). Functionally, eIF-2 functions in the early steps of protein synthesis by forming a ternary complex with GTP and initiator tRNA. The polypeptide is Translation initiation factor 2 subunit gamma (Aeropyrum pernix (strain ATCC 700893 / DSM 11879 / JCM 9820 / NBRC 100138 / K1)).